Reading from the N-terminus, the 334-residue chain is N-acetyl-gamma-glutamyl-phosphate reductase (334 aa).

Residue Cys-154 is part of the active site.

The protein belongs to the NAGSA dehydrogenase family. Type 1 subfamily.

Its subcellular location is the cytoplasm. It catalyses the reaction N-acetyl-L-glutamate 5-semialdehyde + phosphate + NADP(+) = N-acetyl-L-glutamyl 5-phosphate + NADPH + H(+). Its pathway is amino-acid biosynthesis; L-arginine biosynthesis; N(2)-acetyl-L-ornithine from L-glutamate: step 3/4. Catalyzes the NADPH-dependent reduction of N-acetyl-5-glutamyl phosphate to yield N-acetyl-L-glutamate 5-semialdehyde. This Vibrio parahaemolyticus serotype O3:K6 (strain RIMD 2210633) protein is N-acetyl-gamma-glutamyl-phosphate reductase.